The sequence spans 180 residues: Small ribosomal subunit protein uS5 (180 aa).

A disordered region spans residues methionine 1 to glutamine 26. A compositionally biased stretch (basic and acidic residues) spans arginine 17–glutamine 26. The S5 DRBM domain maps to tryptophan 25 to valine 88.

Belongs to the universal ribosomal protein uS5 family. In terms of assembly, part of the 30S ribosomal subunit. Contacts proteins S4 and S8.

With S4 and S12 plays an important role in translational accuracy. Functionally, located at the back of the 30S subunit body where it stabilizes the conformation of the head with respect to the body. This chain is Small ribosomal subunit protein uS5, found in Synechococcus elongatus (strain ATCC 33912 / PCC 7942 / FACHB-805) (Anacystis nidulans R2).